The primary structure comprises 155 residues: 6,7-dimethyl-8-ribityllumazine synthase (155 aa).

Residues Tyr-23, 57 to 59, and 81 to 83 contribute to the 5-amino-6-(D-ribitylamino)uracil site; these read AWE and CVI. Residue 86–87 participates in (2S)-2-hydroxy-3-oxobutyl phosphate binding; it reads ET. The active-site Proton donor is His-89. Phe-114 contributes to the 5-amino-6-(D-ribitylamino)uracil binding site. Arg-128 provides a ligand contact to (2S)-2-hydroxy-3-oxobutyl phosphate.

It belongs to the DMRL synthase family.

The catalysed reaction is (2S)-2-hydroxy-3-oxobutyl phosphate + 5-amino-6-(D-ribitylamino)uracil = 6,7-dimethyl-8-(1-D-ribityl)lumazine + phosphate + 2 H2O + H(+). Its pathway is cofactor biosynthesis; riboflavin biosynthesis; riboflavin from 2-hydroxy-3-oxobutyl phosphate and 5-amino-6-(D-ribitylamino)uracil: step 1/2. Functionally, catalyzes the formation of 6,7-dimethyl-8-ribityllumazine by condensation of 5-amino-6-(D-ribitylamino)uracil with 3,4-dihydroxy-2-butanone 4-phosphate. This is the penultimate step in the biosynthesis of riboflavin. This is 6,7-dimethyl-8-ribityllumazine synthase from Rhodopirellula baltica (strain DSM 10527 / NCIMB 13988 / SH1).